Here is a 225-residue protein sequence, read N- to C-terminus: NAD(P)H-quinone oxidoreductase subunit K, chloroplastic (225 aa).

Cys-43, Cys-44, Cys-108, and Cys-139 together coordinate [4Fe-4S] cluster.

It belongs to the complex I 20 kDa subunit family. In terms of assembly, NDH is composed of at least 16 different subunits, 5 of which are encoded in the nucleus. Requires [4Fe-4S] cluster as cofactor.

Its subcellular location is the plastid. It is found in the chloroplast thylakoid membrane. The catalysed reaction is a plastoquinone + NADH + (n+1) H(+)(in) = a plastoquinol + NAD(+) + n H(+)(out). It carries out the reaction a plastoquinone + NADPH + (n+1) H(+)(in) = a plastoquinol + NADP(+) + n H(+)(out). Its function is as follows. NDH shuttles electrons from NAD(P)H:plastoquinone, via FMN and iron-sulfur (Fe-S) centers, to quinones in the photosynthetic chain and possibly in a chloroplast respiratory chain. The immediate electron acceptor for the enzyme in this species is believed to be plastoquinone. Couples the redox reaction to proton translocation, and thus conserves the redox energy in a proton gradient. The polypeptide is NAD(P)H-quinone oxidoreductase subunit K, chloroplastic (Barbarea verna (Land cress)).